The chain runs to 315 residues: Olfactory receptor 3A10 (315 aa).

Residues 1 to 28 (MEPGAWGNRTAVTDFILLGLTGNVRLQP) lie on the Extracellular side of the membrane. An N-linked (GlcNAc...) asparagine glycan is attached at Asn8. A helical membrane pass occupies residues 29–49 (ILFVVFFFAYIVTVGGNLSIL). The Cytoplasmic portion of the chain corresponds to 50-68 (AAIFVEPKLHTPMYYFLGN). The chain crosses the membrane as a helical span at residues 69-89 (LSLLDIGCISVTVPPMLVCLL). Residues 90 to 97 (AHECRVPY) are Extracellular-facing. A helical membrane pass occupies residues 98–118 (AACISQLFFFHLLAGVDCHLL). Residues Cys100 and Cys192 are joined by a disulfide bond. The Cytoplasmic portion of the chain corresponds to 119 to 145 (TAMAYDRYLAICQPLTYSTRMSREVQG). A helical membrane pass occupies residues 146–166 (TLVGICCTVSFINALTHTVAV). The Extracellular segment spans residues 167–200 (SVLDFCGPNVVNHFYCDLPPLFQLSCSSIYLNGQ). The helical transmembrane segment at 201-221 (LLFVGATFMGVVPMILISVSY) threads the bilayer. The Cytoplasmic segment spans residues 222–239 (AHVAAAVLRIRSTEGRKK). The chain crosses the membrane as a helical span at residues 240-260 (AFSTCGSHLTVVCIFYGTGFF). Residues 261–274 (SYMRLGSVSASDKD) lie on the Extracellular side of the membrane. Residues 275–295 (KGIGILNTILSPMLNPLIYSL) traverse the membrane as a helical segment. At 296-315 (RNPDVQGALKRVLTGKRYPV) the chain is on the cytoplasmic side.

This sequence belongs to the G-protein coupled receptor 1 family.

The protein localises to the cell membrane. In terms of biological role, odorant receptor. The protein is Olfactory receptor 3A10 of Mus musculus (Mouse).